Here is a 288-residue protein sequence, read N- to C-terminus: Elongation factor Ts (288 aa).

The tract at residues 80–83 (TDFL) is involved in Mg(2+) ion dislocation from EF-Tu.

It belongs to the EF-Ts family.

It localises to the cytoplasm. Associates with the EF-Tu.GDP complex and induces the exchange of GDP to GTP. It remains bound to the aminoacyl-tRNA.EF-Tu.GTP complex up to the GTP hydrolysis stage on the ribosome. The chain is Elongation factor Ts from Pseudomonas fluorescens (strain ATCC BAA-477 / NRRL B-23932 / Pf-5).